A 575-amino-acid polypeptide reads, in one-letter code: Potassium-transporting ATPase potassium-binding subunit (575 aa).

The next 12 helical transmembrane spans lie at 3-23 (FEGVLQIVATLVLMVAIVPFF), 69-89 (AVLASNAAMFVPVFAVLLLQG), 136-156 (CFQFLMFTSAATGLAVGIAFI), 178-198 (ILMPISIAFAVVLLSQGVPQS), 266-286 (LLEILLLLAVPTSLIYTFGVL), 293-313 (GWVLFGTIFVLFVGLVGVAAL), 340-360 (FGWAQSALFATATTGTMTGAV), 367-387 (LTPLAGLVTLFNLCLQVIWGG), 391-411 (GIAYILVFLIIAVFLTGLMVG), 431-451 (IIFLVHPVIILVPTAIALAIP), 498-518 (VVLLLGRYAPIVALLALAGGL), and 543-563 (AGTILILGALTFFPVFALGPI).

Belongs to the KdpA family. The system is composed of three essential subunits: KdpA, KdpB and KdpC.

The protein resides in the cell inner membrane. Functionally, part of the high-affinity ATP-driven potassium transport (or Kdp) system, which catalyzes the hydrolysis of ATP coupled with the electrogenic transport of potassium into the cytoplasm. This subunit binds the periplasmic potassium ions and delivers the ions to the membrane domain of KdpB through an intramembrane tunnel. The polypeptide is Potassium-transporting ATPase potassium-binding subunit (Gloeobacter violaceus (strain ATCC 29082 / PCC 7421)).